The chain runs to 371 residues: Putative glutamate--cysteine ligase 2 (371 aa).

This sequence belongs to the glutamate--cysteine ligase type 2 family. YbdK subfamily.

It carries out the reaction L-cysteine + L-glutamate + ATP = gamma-L-glutamyl-L-cysteine + ADP + phosphate + H(+). Its function is as follows. ATP-dependent carboxylate-amine ligase which exhibits weak glutamate--cysteine ligase activity. The chain is Putative glutamate--cysteine ligase 2 from Burkholderia thailandensis (strain ATCC 700388 / DSM 13276 / CCUG 48851 / CIP 106301 / E264).